The chain runs to 1390 residues: DNA-directed RNA polymerase subunit beta (1390 aa).

This sequence belongs to the RNA polymerase beta chain family. In terms of assembly, the RNAP catalytic core consists of 2 alpha, 1 beta, 1 beta' and 1 omega subunit. When a sigma factor is associated with the core the holoenzyme is formed, which can initiate transcription.

It carries out the reaction RNA(n) + a ribonucleoside 5'-triphosphate = RNA(n+1) + diphosphate. DNA-dependent RNA polymerase catalyzes the transcription of DNA into RNA using the four ribonucleoside triphosphates as substrates. This chain is DNA-directed RNA polymerase subunit beta, found in Chromobacterium violaceum (strain ATCC 12472 / DSM 30191 / JCM 1249 / CCUG 213 / NBRC 12614 / NCIMB 9131 / NCTC 9757 / MK).